We begin with the raw amino-acid sequence, 997 residues long: DNA polymerase I (997 aa).

A 5'-3' exonuclease domain is found at 174 to 261 (VMPTQLLDLF…VPCVFSLEDS (88 aa)). The region spanning 428–589 (VPDVSLHTES…LYHYLKLRLE (162 aa)) is the 3'-5' exonuclease domain.

Belongs to the DNA polymerase type-A family.

It carries out the reaction DNA(n) + a 2'-deoxyribonucleoside 5'-triphosphate = DNA(n+1) + diphosphate. In addition to polymerase activity, this DNA polymerase exhibits 3'-5' and 5'-3' exonuclease activity. This Treponema pallidum (strain Nichols) protein is DNA polymerase I (polA).